Consider the following 396-residue polypeptide: 8-amino-7-oxononanoate synthase (396 aa).

A substrate-binding site is contributed by arginine 21. 108–109 (GY) contributes to the pyridoxal 5'-phosphate binding site. Histidine 133 serves as a coordination point for substrate. Positions 179, 207, and 236 each coordinate pyridoxal 5'-phosphate. Lysine 239 is subject to N6-(pyridoxal phosphate)lysine. Threonine 353 provides a ligand contact to substrate.

This sequence belongs to the class-II pyridoxal-phosphate-dependent aminotransferase family. BioF subfamily. In terms of assembly, homodimer. The cofactor is pyridoxal 5'-phosphate.

The catalysed reaction is 6-carboxyhexanoyl-[ACP] + L-alanine + H(+) = (8S)-8-amino-7-oxononanoate + holo-[ACP] + CO2. Its pathway is cofactor biosynthesis; biotin biosynthesis. In terms of biological role, catalyzes the decarboxylative condensation of pimeloyl-[acyl-carrier protein] and L-alanine to produce 8-amino-7-oxononanoate (AON), [acyl-carrier protein], and carbon dioxide. The polypeptide is 8-amino-7-oxononanoate synthase (Hahella chejuensis (strain KCTC 2396)).